The primary structure comprises 237 residues: N-(5'-phosphoribosyl)anthranilate isomerase (237 aa).

Belongs to the TrpF family.

The catalysed reaction is N-(5-phospho-beta-D-ribosyl)anthranilate = 1-(2-carboxyphenylamino)-1-deoxy-D-ribulose 5-phosphate. The protein operates within amino-acid biosynthesis; L-tryptophan biosynthesis; L-tryptophan from chorismate: step 3/5. In Komagataella pastoris (Yeast), this protein is N-(5'-phosphoribosyl)anthranilate isomerase (TRP1).